The chain runs to 358 residues: GDSL esterase/lipase EXL5 (358 aa).

The signal sequence occupies residues 1-21 (MFRKKMLVLALFSIYFLSIEA). N-linked (GlcNAc...) asparagine glycosylation is present at Asn24. Ser36 (nucleophile) is an active-site residue. Residues Asp333 and His336 contribute to the active site.

It belongs to the 'GDSL' lipolytic enzyme family. Flower buds.

It is found in the secreted. In Arabidopsis thaliana (Mouse-ear cress), this protein is GDSL esterase/lipase EXL5 (EXL5).